The following is a 635-amino-acid chain: 1-deoxy-D-xylulose-5-phosphate synthase (635 aa).

Thiamine diphosphate is bound by residues His-78 and 119 to 121 (GHA). Asp-151 lines the Mg(2+) pocket. Thiamine diphosphate-binding positions include 152–153 (GA), Asn-180, and Tyr-291. Asn-180 serves as a coordination point for Mg(2+). The interval 305–325 (PAFEDRGGTPVTRGSDGRPPY) is disordered. Glu-374 contacts thiamine diphosphate.

It belongs to the transketolase family. DXPS subfamily. As to quaternary structure, homodimer. It depends on Mg(2+) as a cofactor. Thiamine diphosphate is required as a cofactor.

It catalyses the reaction D-glyceraldehyde 3-phosphate + pyruvate + H(+) = 1-deoxy-D-xylulose 5-phosphate + CO2. Its pathway is metabolic intermediate biosynthesis; 1-deoxy-D-xylulose 5-phosphate biosynthesis; 1-deoxy-D-xylulose 5-phosphate from D-glyceraldehyde 3-phosphate and pyruvate: step 1/1. Catalyzes the acyloin condensation reaction between C atoms 2 and 3 of pyruvate and glyceraldehyde 3-phosphate to yield 1-deoxy-D-xylulose-5-phosphate (DXP). The chain is 1-deoxy-D-xylulose-5-phosphate synthase from Rhodopirellula baltica (strain DSM 10527 / NCIMB 13988 / SH1).